The sequence spans 269 residues: uncharacterized protein (269 aa).

The ACT domain maps to 14-89; that stretch reads FEYEIQVNRP…KLREPRLRDR (76 aa).

This is an uncharacterized protein from Bacillus subtilis (strain 168).